A 239-amino-acid chain; its full sequence is DnaA regulatory inactivator Hda (239 aa).

This sequence belongs to the DnaA family. HdA subfamily. In terms of assembly, the active form seems to be an ADP-bound monomer. Forms the RIDA complex (regulatory inactivation of DnaA) of ATP-DnaA, ADP-Hda and the DNA-loaded beta sliding clamp (dnaN).

Functionally, mediates the interaction of DNA replication initiator protein DnaA with DNA polymerase subunit beta sliding clamp (dnaN). Stimulates hydrolysis of ATP-DnaA to ADP-DnaA, rendering DnaA inactive for reinitiation, a process called regulatory inhibition of DnaA or RIDA. The protein is DnaA regulatory inactivator Hda of Yersinia pseudotuberculosis serotype O:1b (strain IP 31758).